A 260-amino-acid chain; its full sequence is Proteasome subunit alpha 1 (260 aa).

Positions 237–260 are disordered; it reads AEADLLDTGEDADDEAEDEDATEE. Acidic residues predominate over residues 240-260; the sequence is DLLDTGEDADDEAEDEDATEE.

Belongs to the peptidase T1A family. The 20S proteasome core is composed of 14 alpha and 14 beta subunits that assemble into four stacked heptameric rings, resulting in a barrel-shaped structure. The two inner rings, each composed of seven catalytic beta subunits, are sandwiched by two outer rings, each composed of seven alpha subunits. The catalytic chamber with the active sites is on the inside of the barrel. Has a gated structure, the ends of the cylinder being occluded by the N-termini of the alpha-subunits. Is capped at one or both ends by the proteasome regulatory ATPase, PAN.

It localises to the cytoplasm. With respect to regulation, the formation of the proteasomal ATPase PAN-20S proteasome complex, via the docking of the C-termini of PAN into the intersubunit pockets in the alpha-rings, triggers opening of the gate for substrate entry. Interconversion between the open-gate and close-gate conformations leads to a dynamic regulation of the 20S proteasome proteolysis activity. Component of the proteasome core, a large protease complex with broad specificity involved in protein degradation. The polypeptide is Proteasome subunit alpha 1 (Haloarcula marismortui (strain ATCC 43049 / DSM 3752 / JCM 8966 / VKM B-1809) (Halobacterium marismortui)).